We begin with the raw amino-acid sequence, 155 residues long: 3-hydroxyacyl-[acyl-carrier-protein] dehydratase FabZ (155 aa).

The active site involves histidine 54.

Belongs to the thioester dehydratase family. FabZ subfamily.

It is found in the cytoplasm. It catalyses the reaction a (3R)-hydroxyacyl-[ACP] = a (2E)-enoyl-[ACP] + H2O. Its function is as follows. Involved in unsaturated fatty acids biosynthesis. Catalyzes the dehydration of short chain beta-hydroxyacyl-ACPs and long chain saturated and unsaturated beta-hydroxyacyl-ACPs. In Burkholderia ambifaria (strain MC40-6), this protein is 3-hydroxyacyl-[acyl-carrier-protein] dehydratase FabZ.